The primary structure comprises 763 residues: Phosphoglycerol transferase I (763 aa).

A run of 4 helical transmembrane segments spans residues 1–21, 26–46, 77–97, and 108–128; these read MSELLSFALFLASVLIYAWKA, WWFAATLTVLGLFVVLNITLF, ILPGIGIVLGLTAVFGALGWI, and FGYSLLALLLALGSVDASPAF.

The protein belongs to the OpgB family.

Its subcellular location is the cell inner membrane. It carries out the reaction a phosphatidylglycerol + a membrane-derived-oligosaccharide D-glucose = a 1,2-diacyl-sn-glycerol + a membrane-derived-oligosaccharide 6-(glycerophospho)-D-glucose.. It functions in the pathway glycan metabolism; osmoregulated periplasmic glucan (OPG) biosynthesis. Functionally, transfers a phosphoglycerol residue from phosphatidylglycerol to the membrane-bound nascent glucan backbones. This chain is Phosphoglycerol transferase I, found in Escherichia coli (strain ATCC 8739 / DSM 1576 / NBRC 3972 / NCIMB 8545 / WDCM 00012 / Crooks).